The following is a 427-amino-acid chain: Ribose-phosphate pyrophosphokinase 1 (427 aa).

Mg(2+) contacts are provided by D128, H130, and D143. Phosphoserine is present on residues S199, S218, S271, and S295.

Belongs to the ribose-phosphate pyrophosphokinase family.

It is found in the cytoplasm. The catalysed reaction is D-ribose 5-phosphate + ATP = 5-phospho-alpha-D-ribose 1-diphosphate + AMP + H(+). It participates in metabolic intermediate biosynthesis; 5-phospho-alpha-D-ribose 1-diphosphate biosynthesis; 5-phospho-alpha-D-ribose 1-diphosphate from D-ribose 5-phosphate (route I): step 1/1. Its function is as follows. 5-phosphoribose 1-diphosphate synthase involved in nucleotide, histidine, and tryptophan biosynthesis. Active in heteromultimeric complexes with other 5-phosphoribose 1-diphosphate synthases (PRS2, PRS3, PRS4 and PRS5). The protein is Ribose-phosphate pyrophosphokinase 1 (PRS1) of Saccharomyces cerevisiae (strain ATCC 204508 / S288c) (Baker's yeast).